The sequence spans 159 residues: MVPAAGQLALLALGILVAVCQALENSTSPLSDSPVAAAVVSHFNKCPDSHTQYCFHGTCRFLVQEEKPACVCHSGYVGVRCEHADLLAVVAASQKKQAITALVVVSIVALAVLIITCVLIHCCQVRKHCEWCRALVCRHEKPSALLKGRTACCHSETVV.

The signal sequence occupies residues 1 to 23 (MVPAAGQLALLALGILVAVCQAL). A propeptide spans 24 to 38 (ENSTSPLSDSPVAAA) (removed in mature form). At 24-97 (ENSTSPLSDS…AVVAASQKKQ (74 aa)) the chain is on the extracellular side. N-linked (GlcNAc...) asparagine glycosylation is present at Asn25. The EGF-like domain maps to 42–82 (HFNKCPDSHTQYCFHGTCRFLVQEEKPACVCHSGYVGVRCE). 3 disulfides stabilise this stretch: Cys46–Cys59, Cys54–Cys70, and Cys72–Cys81. Positions 89 to 159 (VVAASQKKQA…TACCHSETVV (71 aa)) are cleaved as a propeptide — removed in mature form. The chain crosses the membrane as a helical span at residues 98–123 (AITALVVVSIVALAVLIITCVLIHCC). At 124-159 (QVRKHCEWCRALVCRHEKPSALLKGRTACCHSETVV) the chain is on the cytoplasmic side. S-palmitoyl cysteine attachment occurs at residues Cys152 and Cys153.

Interacts with the PDZ domains of MAGI3, SDCBP and SNTA1. The interaction with SDCBP, is required for the targeting to the cell surface. In the endoplasmic reticulum, in its immature form (i.e. with a prosegment and lacking full N-glycosylation), interacts with CNIH. In the Golgi apparatus, may form a complex with CNIH and GORASP2. Interacts (via cytoplasmic C-terminal domain) with NKD2.

The protein resides in the secreted. It is found in the extracellular space. The protein localises to the cell membrane. TGF alpha is a mitogenic polypeptide that is able to bind to the EGF receptor/EGFR and to act synergistically with TGF beta to promote anchorage-independent cell proliferation in soft agar. The chain is Protransforming growth factor alpha (Tgfa) from Rattus norvegicus (Rat).